Consider the following 700-residue polypeptide: Methionine--tRNA ligase (700 aa).

Residues 14-24 (PYANGPVHLGH) carry the 'HIGH' region motif. Zn(2+) contacts are provided by Cys-146, Cys-149, Cys-159, and Cys-162. Residues 344-348 (KFSKS) carry the 'KMSKS' region motif. Residue Lys-347 coordinates ATP. Positions 599–700 (DFLKVDLRVA…GEEINGRQIQ (102 aa)) constitute a tRNA-binding domain.

This sequence belongs to the class-I aminoacyl-tRNA synthetase family. MetG type 1 subfamily. In terms of assembly, homodimer. Zn(2+) serves as cofactor.

The protein resides in the cytoplasm. It catalyses the reaction tRNA(Met) + L-methionine + ATP = L-methionyl-tRNA(Met) + AMP + diphosphate. Its function is as follows. Is required not only for elongation of protein synthesis but also for the initiation of all mRNA translation through initiator tRNA(fMet) aminoacylation. The chain is Methionine--tRNA ligase from Pelodictyon phaeoclathratiforme (strain DSM 5477 / BU-1).